The chain runs to 476 residues: Sulfate adenylyltransferase subunit 1 (476 aa).

The 205-residue stretch at 24-228 (KSLLRFLTCG…MAWYQGPTLL (205 aa)) folds into the tr-type G domain. Residues 33–40 (GSVDDGKS) are G1. 33 to 40 (GSVDDGKS) is a GTP binding site. A G2 region spans residues 91–95 (GITID). The tract at residues 112–115 (DTPG) is G3. Residues 112–116 (DTPGH) and 167–170 (NKMD) each bind GTP. A G4 region spans residues 167 to 170 (NKMD). The G5 stretch occupies residues 205–207 (SAL).

This sequence belongs to the TRAFAC class translation factor GTPase superfamily. Classic translation factor GTPase family. CysN/NodQ subfamily. Heterodimer composed of CysD, the smaller subunit, and CysN.

The enzyme catalyses sulfate + ATP + H(+) = adenosine 5'-phosphosulfate + diphosphate. The protein operates within sulfur metabolism; hydrogen sulfide biosynthesis; sulfite from sulfate: step 1/3. In terms of biological role, with CysD forms the ATP sulfurylase (ATPS) that catalyzes the adenylation of sulfate producing adenosine 5'-phosphosulfate (APS) and diphosphate, the first enzymatic step in sulfur assimilation pathway. APS synthesis involves the formation of a high-energy phosphoric-sulfuric acid anhydride bond driven by GTP hydrolysis by CysN coupled to ATP hydrolysis by CysD. In Vibrio vulnificus (strain CMCP6), this protein is Sulfate adenylyltransferase subunit 1.